The chain runs to 494 residues: Vacuolar-processing enzyme (494 aa).

The first 20 residues, 1 to 20 (MTRLASGVLITLLVALAGIA), serve as a signal peptide directing secretion. The N-linked (GlcNAc...) asparagine glycan is linked to Asn-151. His-178 is a catalytic residue. The active-site Nucleophile is the Cys-220. Cys-253 and Cys-267 form a disulfide bridge. Residue Asn-336 is glycosylated (N-linked (GlcNAc...) asparagine). Disulfide bonds link Cys-430-Cys-460 and Cys-442-Cys-477.

Belongs to the peptidase C13 family. As to expression, high levels are seen in the flowers, a lower level expression is seen in the leaves, while very low levels are seen in the stems and roots.

Functionally, asparagine-specific endopeptidase that may be involved in processing of proteins targeted to vacuoles that accumulate during ethylene-regulated processes such as flower opening and flavedo degreening. This chain is Vacuolar-processing enzyme, found in Citrus sinensis (Sweet orange).